We begin with the raw amino-acid sequence, 256 residues long: 5'-nucleotidase SurE (256 aa).

Asp8, Asp9, Ser42, and Asn94 together coordinate a divalent metal cation.

Belongs to the SurE nucleotidase family. A divalent metal cation serves as cofactor.

The protein localises to the cytoplasm. It catalyses the reaction a ribonucleoside 5'-phosphate + H2O = a ribonucleoside + phosphate. Nucleotidase that shows phosphatase activity on nucleoside 5'-monophosphates. The polypeptide is 5'-nucleotidase SurE (Ehrlichia chaffeensis (strain ATCC CRL-10679 / Arkansas)).